We begin with the raw amino-acid sequence, 55 residues long: Ferredoxin-1 (55 aa).

4Fe-4S ferredoxin-type domains lie at 2-27 (YKIE…EQGD) and 28-55 (TIFV…PVAE). Residues cysteine 8, cysteine 11, cysteine 14, cysteine 18, cysteine 37, cysteine 40, cysteine 43, and cysteine 47 each contribute to the [4Fe-4S] cluster site.

It depends on [4Fe-4S] cluster as a cofactor.

In terms of biological role, ferredoxins are iron-sulfur proteins that transfer electrons in a wide variety of metabolic reactions. The polypeptide is Ferredoxin-1 (Rhodospirillum rubrum).